The following is a 482-amino-acid chain: MSTKKKEAVIGKESLAHKGLLRTITLVSTFGGLLFGYDTGVINGALPFMATAGQLNLTPVTEGLVASSLLLGAAFGAMFGGRLSDRHGRRKTILYLALLFIAATLGCTFSPNASVMIAFRFLLGLAVGCASVTVPTFLAEISPAERRGRIVTQNELMIVIGQLLAYTFNAIIGSTMGESANVWRYMLVIATLPAVVLWFGMLIVPESPRWLAAKGRMGDALRVLRQIREDSQAQQEIKEIKHAIEGTAKKAGFHDFQEPWIRRILFIGIGIAIVQQITGVNSIMYYGTEILREAGFQTEAALIGNIANGVISVIAVIFGIWLLGKVRRRPMLIIGQIGTMTALLLIGILSIVLEGTPALPYVVLSLTILFLAFQQTAISTVTWLMLSEIFPMHVRGLGMGISTFCLWTANFLIGFTFPILLNHIGMSATFFIFVAMNILAILFVKKYVPETKGRSLEQLEHSFRQYGRRADQEIQNQTTHLS.

Residues 1–29 are Cytoplasmic-facing; the sequence is MSTKKKEAVIGKESLAHKGLLRTITLVST. A helical membrane pass occupies residues 30–50; that stretch reads FGGLLFGYDTGVINGALPFMA. Residues 51–59 are Extracellular-facing; it reads TAGQLNLTP. A helical membrane pass occupies residues 60 to 80; sequence VTEGLVASSLLLGAAFGAMFG. The Cytoplasmic portion of the chain corresponds to 81–92; sequence GRLSDRHGRRKT. A helical transmembrane segment spans residues 93 to 113; the sequence is ILYLALLFIAATLGCTFSPNA. The Extracellular segment spans residues 114 to 120; that stretch reads SVMIAFR. Residues 121–141 traverse the membrane as a helical segment; that stretch reads FLLGLAVGCASVTVPTFLAEI. Residues 142–155 are Cytoplasmic-facing; that stretch reads SPAERRGRIVTQNE. Residues 156–176 form a helical membrane-spanning segment; it reads LMIVIGQLLAYTFNAIIGSTM. The Extracellular segment spans residues 177-184; that stretch reads GESANVWR. Residues 185–205 form a helical membrane-spanning segment; sequence YMLVIATLPAVVLWFGMLIVP. The Cytoplasmic portion of the chain corresponds to 206-263; it reads ESPRWLAAKGRMGDALRVLRQIREDSQAQQEIKEIKHAIEGTAKKAGFHDFQEPWIRR. Residues 264-284 form a helical membrane-spanning segment; the sequence is ILFIGIGIAIVQQITGVNSIM. Over 285 to 301 the chain is Extracellular; sequence YYGTEILREAGFQTEAA. The helical transmembrane segment at 302–322 threads the bilayer; sequence LIGNIANGVISVIAVIFGIWL. The Cytoplasmic segment spans residues 323 to 331; the sequence is LGKVRRRPM. 2 helical membrane-spanning segments follow: residues 332–352 and 353–373; these read LIIG…LSIV and LEGT…FLAF. The Cytoplasmic portion of the chain corresponds to 374–400; it reads QQTAISTVTWLMLSEIFPMHVRGLGMG. A helical transmembrane segment spans residues 401–421; sequence ISTFCLWTANFLIGFTFPILL. Residues 422 to 423 are Extracellular-facing; sequence NH. The helical transmembrane segment at 424 to 444 threads the bilayer; the sequence is IGMSATFFIFVAMNILAILFV. Over 445 to 482 the chain is Cytoplasmic; that stretch reads KKYVPETKGRSLEQLEHSFRQYGRRADQEIQNQTTHLS.

It belongs to the major facilitator superfamily. Sugar transporter (TC 2.A.1.1) family.

Its subcellular location is the cell membrane. The chain is Putative metabolite transport protein YfiG (yfiG) from Bacillus subtilis (strain 168).